Here is a 298-residue protein sequence, read N- to C-terminus: Centromere protein O (298 aa).

The disordered stretch occupies residues 29-49; sequence NISNRKSEEPAVRKKESSLRT. The segment covering 33-49 has biased composition (basic and acidic residues); that stretch reads RKSEEPAVRKKESSLRT. Ser-35 carries the post-translational modification Phosphoserine. Residues 39–74 are a coiled coil; it reads AVRKKESSLRTKIRELRQQRDKLRAEVKQWGARVKE.

It belongs to the CENP-O/MCM21 family. As to quaternary structure, component of the CENPA-CAD complex, composed of CENPI, CENPK, CENPL, CENPO, CENPP, CENPQ, CENPR and CENPS. The CENPA-CAD complex interacts with the CENPA-NAC complex, at least composed of CENPA, CENPC, CENPH, CENPM, CENPN, CENPT and CENPU.

The protein localises to the nucleus. The protein resides in the chromosome. It is found in the centromere. It localises to the kinetochore. Functionally, component of the CENPA-CAD (nucleosome distal) complex, a complex recruited to centromeres which is involved in assembly of kinetochore proteins, mitotic progression and chromosome segregation. May be involved in incorporation of newly synthesized CENPA into centromeres via its interaction with the CENPA-NAC complex. Modulates the kinetochore-bound levels of NDC80 complex. The protein is Centromere protein O (Cenpo) of Mus musculus (Mouse).